Consider the following 483-residue polypeptide: Pre-glycoprotein polyprotein GP complex (483 aa).

The N-myristoyl glycine; by host moiety is linked to residue G2. Over 2 to 17 (GQFISFMQEIPIFLQE) the chain is Extracellular. A helical transmembrane segment spans residues 18 to 32 (ALNIALVAVSLICIV). Residue K33 is a topological domain, cytoplasmic. A helical membrane pass occupies residues 34–53 (GLVNLYRCGLFQLMVFLVLA). Extracellular segments lie at residues 54–58 (GRSCS) and 59–422 (EETF…TLVD). C57 is a binding site for Zn(2+). N83 and N95 each carry an N-linked (GlcNAc...) asparagine; by host glycan. Intrachain disulfides connect C92–C224, C134–C162, C205–C211, C269–C282, C291–C300, and C354–C375. N164 and N176 each carry an N-linked (GlcNAc...) asparagine; by host glycan. N-linked (GlcNAc...) asparagine; by host glycans are attached at residues N355, N363, N380, and N385. The helical transmembrane segment at 423–443 (ICFWSTVFFTSTLFLHLIGFP) threads the bilayer. Residues 444–483 (THEHIRGEGCPLPHRLNSMGGCRCGKYLPLKKPTIWHRRH) lie on the Cytoplasmic side of the membrane. Positions 445, 447, 453, 457, 465, 467, and 483 each coordinate Zn(2+).

Belongs to the arenaviridae GPC protein family. Homotetramer; disulfide-linked. In terms of assembly, homotetramer. GP2 homotetramers bind through ionic interactions with GP1 homotetramers to form the GP complex together with the stable signal peptide. The GP-C polyprotein interacts with the host protease MBTPS1/SKI-1 resulting in the polyprotein processing. Specific enzymatic cleavages in vivo yield mature proteins. GP-C polyprotein is cleaved in the endoplasmic reticulum by the host protease MBTPS1. Only cleaved glycoprotein is incorporated into virions. Post-translationally, the SSP remains stably associated with the GP complex following cleavage by signal peptidase and plays crucial roles in the trafficking of GP through the secretory pathway. In terms of processing, myristoylation is necessary for GP2-mediated fusion activity.

It localises to the virion membrane. The protein localises to the host endoplasmic reticulum membrane. Its subcellular location is the host Golgi apparatus membrane. The protein resides in the host cell membrane. Its function is as follows. Class I viral fusion protein that directs fusion of viral and host endosomal membranes, leading to delivery of the nucleocapsid into the cytoplasm. Membrane fusion is mediated by irreversible conformational changes induced upon acidification in the endosome. In terms of biological role, stable signal peptide (SSP): cleaved and functions as a signal peptide. In addition, it is also retained as the third component of the GP complex. The SSP is required for efficient glycoprotein expression, post-translational maturation cleavage of GP1 and GP2, glycoprotein transport to the cell surface plasma membrane, formation of infectious virus particles, and acid pH-dependent glycoprotein-mediated cell fusion. Functionally, interacts with the host receptor. This is Pre-glycoprotein polyprotein GP complex from Artibeus (neotropical fruit bats).